A 181-amino-acid polypeptide reads, in one-letter code: Large ribosomal subunit protein uL5 (181 aa).

Belongs to the universal ribosomal protein uL5 family. As to quaternary structure, part of the 50S ribosomal subunit; part of the 5S rRNA/L5/L18/L25 subcomplex. Contacts the 5S rRNA and the P site tRNA. Forms a bridge to the 30S subunit in the 70S ribosome.

Its function is as follows. This is one of the proteins that bind and probably mediate the attachment of the 5S RNA into the large ribosomal subunit, where it forms part of the central protuberance. In the 70S ribosome it contacts protein S13 of the 30S subunit (bridge B1b), connecting the 2 subunits; this bridge is implicated in subunit movement. Contacts the P site tRNA; the 5S rRNA and some of its associated proteins might help stabilize positioning of ribosome-bound tRNAs. In Helicobacter acinonychis (strain Sheeba), this protein is Large ribosomal subunit protein uL5.